Reading from the N-terminus, the 152-residue chain is Transcriptional regulator MraZ (152 aa).

SpoVT-AbrB domains lie at 5 to 52 (ATLV…PLPE) and 81 to 124 (ASEC…DETT).

The protein belongs to the MraZ family. In terms of assembly, forms oligomers.

It is found in the cytoplasm. The protein resides in the nucleoid. Its function is as follows. Negatively regulates its own expression and that of the subsequent genes in the proximal part of the division and cell wall (dcw) gene cluster. Acts by binding directly to DNA. May also regulate the expression of genes outside the dcw cluster. This is Transcriptional regulator MraZ from Klebsiella pneumoniae (strain 342).